The primary structure comprises 567 residues: 2-succinyl-5-enolpyruvyl-6-hydroxy-3-cyclohexene-1-carboxylate synthase (567 aa).

The protein belongs to the TPP enzyme family. MenD subfamily. Homodimer. Mg(2+) serves as cofactor. Mn(2+) is required as a cofactor. The cofactor is thiamine diphosphate.

It carries out the reaction isochorismate + 2-oxoglutarate + H(+) = 5-enolpyruvoyl-6-hydroxy-2-succinyl-cyclohex-3-ene-1-carboxylate + CO2. It functions in the pathway quinol/quinone metabolism; 1,4-dihydroxy-2-naphthoate biosynthesis; 1,4-dihydroxy-2-naphthoate from chorismate: step 2/7. Its pathway is quinol/quinone metabolism; menaquinone biosynthesis. Its function is as follows. Catalyzes the thiamine diphosphate-dependent decarboxylation of 2-oxoglutarate and the subsequent addition of the resulting succinic semialdehyde-thiamine pyrophosphate anion to isochorismate to yield 2-succinyl-5-enolpyruvyl-6-hydroxy-3-cyclohexene-1-carboxylate (SEPHCHC). The polypeptide is 2-succinyl-5-enolpyruvyl-6-hydroxy-3-cyclohexene-1-carboxylate synthase (Shewanella loihica (strain ATCC BAA-1088 / PV-4)).